The primary structure comprises 432 residues: Adenylosuccinate synthetase (432 aa).

Residues 12 to 18 (GDEGKGK) and 40 to 42 (GHT) each bind GTP. Catalysis depends on Asp-13, which acts as the Proton acceptor. Mg(2+) contacts are provided by Asp-13 and Gly-40. IMP-binding positions include 13–16 (DEGK), 38–41 (NAGH), Thr-132, Arg-146, Gln-226, Thr-241, and Arg-305. His-41 acts as the Proton donor in catalysis. 301–307 (TVTGRKR) is a substrate binding site. GTP contacts are provided by residues Arg-307, 333–335 (KLD), and 415–417 (STS).

The protein belongs to the adenylosuccinate synthetase family. Homodimer. Requires Mg(2+) as cofactor.

It localises to the cytoplasm. It catalyses the reaction IMP + L-aspartate + GTP = N(6)-(1,2-dicarboxyethyl)-AMP + GDP + phosphate + 2 H(+). It functions in the pathway purine metabolism; AMP biosynthesis via de novo pathway; AMP from IMP: step 1/2. Plays an important role in the de novo pathway of purine nucleotide biosynthesis. Catalyzes the first committed step in the biosynthesis of AMP from IMP. This chain is Adenylosuccinate synthetase, found in Sinorhizobium medicae (strain WSM419) (Ensifer medicae).